Consider the following 357-residue polypeptide: GTPase Obg (357 aa).

The Obg domain maps to 1–159; it reads MKFVDEAFID…RNLKLELKVL (159 aa). The OBG-type G domain occupies 160–334; sequence ADVGLLGMPN…LVQSIFQHVH (175 aa). Residues 166 to 173, 191 to 195, 213 to 216, 284 to 287, and 315 to 317 each bind GTP; these read GMPNAGKS, FTTLH, DIPG, NKLD, and SAL. The Mg(2+) site is built by serine 173 and threonine 193.

Belongs to the TRAFAC class OBG-HflX-like GTPase superfamily. OBG GTPase family. In terms of assembly, monomer. Mg(2+) is required as a cofactor.

It is found in the cytoplasm. Functionally, an essential GTPase which binds GTP, GDP and possibly (p)ppGpp with moderate affinity, with high nucleotide exchange rates and a fairly low GTP hydrolysis rate. Plays a role in control of the cell cycle, stress response, ribosome biogenesis and in those bacteria that undergo differentiation, in morphogenesis control. This chain is GTPase Obg, found in Acidovorax ebreus (strain TPSY) (Diaphorobacter sp. (strain TPSY)).